A 351-amino-acid polypeptide reads, in one-letter code: Centromere-binding protein 1 (351 aa).

M1 is subject to N-acetylmethionine. Polar residues-rich tracts occupy residues 1-10 (MNSLANNNKL), 43-52 (LLSQESNDGN), and 65-77 (KGTQSQYESGLTS). Disordered stretches follow at residues 1–164 (MNSL…TQQS), 196–233 (KKDISMQPGRRGRKPTTLATTDEWKKQRKDSHKEVERR), and 327–351 (YEDMHTHKKQENERKSTRSDNPHEA). S45 bears the Phosphoserine; by ATM or ATR mark. S48 is subject to Phosphoserine. At S84 the chain carries Phosphoserine. Composition is skewed to polar residues over residues 100–124 (VNYTDLIQGQEDSSDAHTSNQTNAN) and 138–164 (TPSNEGVKPNTSLEGMTSSPMESTQQS). T138 is modified (phosphothreonine). In terms of domain architecture, bHLH spans 222–270 (QRKDSHKEVERRRRENINTAINVLSDLLPVRESSKAAILACAAEYIQKL).

As to quaternary structure, binds DNA as a dimer. Associates with MET4 to form a heteromeric complex which also includes MET28.

The protein resides in the nucleus. Its subcellular location is the mitochondrion. It localises to the chromosome. The protein localises to the centromere. Functionally, required for chromosome stability and methionine prototrophy. It is involved in chromosomal segregation. Binds to a highly conserved DNA sequence (5'-RTCACRTG-3'), called CDEI, found in centromeres and in several promoters. DNA-binding activity is enhanced by MET28. Required as an auxiliary factor for transcriptional activation of sulfur metabolism together with MET4 and MET28. This is Centromere-binding protein 1 (CBF1) from Saccharomyces cerevisiae (strain ATCC 204508 / S288c) (Baker's yeast).